The chain runs to 339 residues: tRNA dimethylallyltransferase (339 aa).

Residue 36-43 (GPTGSGKT) coordinates ATP. 38–43 (TGSGKT) contributes to the substrate binding site. The interval 61–64 (DSMQ) is interaction with substrate tRNA.

Belongs to the IPP transferase family. In terms of assembly, monomer. It depends on Mg(2+) as a cofactor.

It carries out the reaction adenosine(37) in tRNA + dimethylallyl diphosphate = N(6)-dimethylallyladenosine(37) in tRNA + diphosphate. In terms of biological role, catalyzes the transfer of a dimethylallyl group onto the adenine at position 37 in tRNAs that read codons beginning with uridine, leading to the formation of N6-(dimethylallyl)adenosine (i(6)A). The chain is tRNA dimethylallyltransferase from Chlamydia trachomatis serovar A (strain ATCC VR-571B / DSM 19440 / HAR-13).